Here is a 528-residue protein sequence, read N- to C-terminus: Probable feruloyl esterase B-1 (528 aa).

A signal peptide spans Met1–Ser19. Intrachain disulfides connect Cys29–Cys78, Cys64–Cys117, Cys190–Cys445, Cys259–Cys276, Cys285–Cys295, and Cys505–Cys527. Residues Asn83 and Asn101 are each glycosylated (N-linked (GlcNAc...) asparagine). Ser191 functions as the Acyl-ester intermediate in the catalytic mechanism. Ca(2+)-binding residues include Asp260, Asp263, Ala265, Asp267, and Ile269. N-linked (GlcNAc...) asparagine glycans are attached at residues Asn286, Asn354, and Asn385. Catalysis depends on charge relay system residues Asp404 and His444.

Belongs to the tannase family.

It is found in the secreted. It catalyses the reaction feruloyl-polysaccharide + H2O = ferulate + polysaccharide.. Involved in degradation of plant cell walls. Hydrolyzes the feruloyl-arabinose ester bond in arabinoxylans as well as the feruloyl-galactose and feruloyl-arabinose ester bonds in pectin. This chain is Probable feruloyl esterase B-1 (faeB-1), found in Aspergillus fumigatus (strain CBS 144.89 / FGSC A1163 / CEA10) (Neosartorya fumigata).